The primary structure comprises 267 residues: MDFKYTEEKELIKINNVMIHKYTILYTSNCILDISFGEDKITCFNNRLVFLERGVNISVRIQKQKLTEKPYVAFRLNENVLRHLKNTLMIIYGMSKIDSCECRGVSRKIMTTEVDKMLLNVLREMMGHHNDDSSFISALIYLISKIKCNDKIIESLYMSSITFFTDKVRGVIEKDLSRKWTLAIIADVFNVSEITIRKRLESEDTNFNQILMQSRMSKAALLLLENSYQISQISNMIGISSASYFIRIFNKHFGVTPKQFFNYFKGG.

DNA-binding regions (H-T-H motif) lie at residues 183–204 (AIIA…ESED) and 230–253 (ISQI…NKHF).

As to quaternary structure, homodimer.

Functionally, transcriptional activator of fimbrial genes in enterotoxigenic E.coli. The sequence is that of HTH-type transcriptional activator CsvR from Escherichia coli.